A 423-amino-acid polypeptide reads, in one-letter code: MSEVDEGIQNLSIEKADAGATATATATATTAEKHNQALNSTLKTGLDKSVESQTANSAGSSPTSATSSSNNPHYDVKSTIKSTKLNDEQAQKLTKLISSVPDILKQTKNPAYDEIFGYRINSDGLEYVDIPKRNEILLKFLAADNYDLDLATKRLIATFNWRNEFQPLHAAFDEKFHQELNELGVITQFASGNDNLHVITWNLYGNLKSPKKIFQKFGEGADDGQREGLAKSSSNSNSSSSSSSSGNNRGKNLPGSQFLRWRIGLMEKALQLVDFTDSKNHKIAQIHDYNNVSMFRIDPGMKAATKEIIEIFGQNYPELLSTKYFINVPLIMGWVFTFFKTIGVISAETLKKFQVLNHGDLKETLPKQELPESYGGVKSAKGDPKRSLFDLDVSESIKLTKYGQVVLQRLGDEEIAHNNDEVE.

The tract at residues 1–76 is disordered; that stretch reads MSEVDEGIQN…SSSNNPHYDV (76 aa). 2 stretches are compositionally biased toward low complexity: residues 20–30 and 54–72; these read ATATATATATT and TANS…SNNP. Tyrosine 204 serves as a coordination point for heme. Residues 217 to 382 enclose the CRAL-TRIO domain; it reads FGEGADDGQR…SYGGVKSAKG (166 aa). The disordered stretch occupies residues 221-253; sequence ADDGQREGLAKSSSNSNSSSSSSSSGNNRGKNL. The span at 232–248 shows a compositional bias: low complexity; it reads SSSNSNSSSSSSSSGNN. Heme is bound by residues arginine 262, histidine 287, tyrosine 289, and lysine 323.

This sequence belongs to the SFH5 family. Heme b serves as cofactor.

It is found in the cytoplasm. The protein resides in the endoplasmic reticulum membrane. Its subcellular location is the microsome membrane. It catalyses the reaction a 1,2-diacyl-sn-glycero-3-phospho-(1D-myo-inositol)(in) = a 1,2-diacyl-sn-glycero-3-phospho-(1D-myo-inositol)(out). In terms of biological role, non-classical phosphatidylinositol (PtdIns) transfer protein (PITP), which exhibits PtdIns-binding/transfer activity in the absence of detectable PtdCho-binding/transfer activity. Regulates PtdIns(4,5)P2 homeostasis at the plasma membrane. Heme-binding protein that may play a role in organic oxidant-induced stress responses. This is Phosphatidylinositol transfer protein SFH5 (SFH5) from Lodderomyces elongisporus (strain ATCC 11503 / CBS 2605 / JCM 1781 / NBRC 1676 / NRRL YB-4239) (Yeast).